We begin with the raw amino-acid sequence, 292 residues long: NAD kinase (292 aa).

D64 acts as the Proton acceptor in catalysis. Residues 64 to 65, 138 to 139, R149, R166, D168, 179 to 184, and Q238 each bind NAD(+); these read DG, ND, and TGYAVS.

Belongs to the NAD kinase family. The cofactor is a divalent metal cation.

The protein resides in the cytoplasm. It catalyses the reaction NAD(+) + ATP = ADP + NADP(+) + H(+). In terms of biological role, involved in the regulation of the intracellular balance of NAD and NADP, and is a key enzyme in the biosynthesis of NADP. Catalyzes specifically the phosphorylation on 2'-hydroxyl of the adenosine moiety of NAD to yield NADP. The polypeptide is NAD kinase (Oleidesulfovibrio alaskensis (strain ATCC BAA-1058 / DSM 17464 / G20) (Desulfovibrio alaskensis)).